A 424-amino-acid polypeptide reads, in one-letter code: Histidine--tRNA ligase (424 aa).

It belongs to the class-II aminoacyl-tRNA synthetase family. In terms of assembly, homodimer.

It is found in the cytoplasm. The catalysed reaction is tRNA(His) + L-histidine + ATP = L-histidyl-tRNA(His) + AMP + diphosphate + H(+). The polypeptide is Histidine--tRNA ligase (Shewanella sediminis (strain HAW-EB3)).